A 608-amino-acid polypeptide reads, in one-letter code: Bifunctional lycopene cyclase/phytoene synthase (608 aa).

Residues 1–240 (MSILTYLEFH…LVFATCAIDR (240 aa)) are lycopene beta-cyclase. Helical transmembrane passes span 3-23 (ILTY…ALCW), 37-56 (YKFL…NYIV), 80-97 (YMFF…SNFV), 117-137 (LLVR…AWHL), 150-170 (ILWY…EYIL), 175-195 (AVLL…IVAI), and 218-238 (VEEC…TCAI). Residues 247 to 608 (LYKSSVQNQN…ARKIKSFFVD (362 aa)) form a phytoene synthase region.

It in the N-terminal section; belongs to the lycopene beta-cyclase family. In the C-terminal section; belongs to the phytoene/squalene synthase family.

It localises to the membrane. It catalyses the reaction all-trans-lycopene = gamma-carotene. The enzyme catalyses gamma-carotene = all-trans-beta-carotene. The catalysed reaction is 2 (2E,6E,10E)-geranylgeranyl diphosphate = 15-cis-phytoene + 2 diphosphate. The protein operates within carotenoid biosynthesis; beta-carotene biosynthesis. It functions in the pathway carotenoid biosynthesis; phytoene biosynthesis; all-trans-phytoene from geranylgeranyl diphosphate: step 1/1. Bifunctional enzyme that catalyzes the reactions from geranylgeranyl diphosphate to phytoene (phytoene synthase) and lycopene to beta-carotene via the intermediate gamma-carotene (lycopene cyclase). The polypeptide is Bifunctional lycopene cyclase/phytoene synthase (Blakeslea trispora (Choanephora trispora)).